Reading from the N-terminus, the 386-residue chain is MATTSMPLNKIDPRQRAWVEVSPDAIKANTLAIRSLLDEQCLLMAVVKADGYGHGSETVAEAALAGGATNLGVATLQEALELRKAGIVCPILVLGNLINPEDLDACIHWDLMPTLSSAREALLCNQIAESHDKEFCVHIKVDTGMTRLGCDLRLASELIQLVDNLKNLSLRGIYSHLALADVEANGQANSFTSKQKEKFETLLSSVMPRGKPLYRHLANSAGTLRDKGLHFDMVRVGLALYGYSPLKDLRNNFSLQPALAVRAKVTLLRDVPSDTGVSYGHTFITQRPSRLAVVGIGYADGISRALSGKMSVLIDGKFYPQVGSITMDQLVIDITESPQIQIGSVVTLLGVDGDSAITPYDWSEISGSIPWEILCSFKYRLPRVVI.

Catalysis depends on Lys48, which acts as the Proton acceptor; specific for D-alanine. An N6-(pyridoxal phosphate)lysine modification is found at Lys48. Position 147 (Arg147) interacts with substrate. The Proton acceptor; specific for L-alanine role is filled by Tyr279. Met327 contacts substrate.

It belongs to the alanine racemase family. The cofactor is pyridoxal 5'-phosphate.

The enzyme catalyses L-alanine = D-alanine. It functions in the pathway amino-acid biosynthesis; D-alanine biosynthesis; D-alanine from L-alanine: step 1/1. Functionally, catalyzes the interconversion of L-alanine and D-alanine. May also act on other amino acids. In Prochlorococcus marinus (strain SARG / CCMP1375 / SS120), this protein is Alanine racemase (alr).